The primary structure comprises 672 residues: Putative sodium/calcium exchanger 7 (672 aa).

The signal sequence occupies residues 1–23; that stretch reads MAQPSILFSLTLIFLISIKSCDA. A run of 12 helical transmembrane segments spans residues 88–108, 130–150, 164–184, 196–216, 221–241, 451–471, 479–499, 522–542, 551–571, 581–601, 620–640, and 649–669; these read VILI…VSSA, VAGV…GSIA, LGEL…TIIL, IRDL…FVFY, LWMP…VIGA, LTLL…QFFL, PGLW…IMVF, IAWI…LGVV, GLTI…VSVV, AAAI…PFTI, LILF…VQKF, and VLIS…TGVL.

Belongs to the Ca(2+):cation antiporter (CaCA) (TC 2.A.19) family.

The protein localises to the membrane. This is Putative sodium/calcium exchanger 7 (ncx-7) from Caenorhabditis elegans.